A 245-amino-acid polypeptide reads, in one-letter code: Eukaryotic translation initiation factor 6 (245 aa).

Belongs to the eIF-6 family. Monomer. Associates with the 60S ribosomal subunit.

It is found in the cytoplasm. The protein resides in the nucleus. Its subcellular location is the nucleolus. Its function is as follows. Binds to the 60S ribosomal subunit and prevents its association with the 40S ribosomal subunit to form the 80S initiation complex in the cytoplasm. May also be involved in ribosome biogenesis. The protein is Eukaryotic translation initiation factor 6 of Tetrahymena thermophila (strain SB210).